Consider the following 269-residue polypeptide: Indole-3-glycerol phosphate synthase 1 (269 aa).

It belongs to the TrpC family.

It catalyses the reaction 1-(2-carboxyphenylamino)-1-deoxy-D-ribulose 5-phosphate + H(+) = (1S,2R)-1-C-(indol-3-yl)glycerol 3-phosphate + CO2 + H2O. It participates in amino-acid biosynthesis; L-tryptophan biosynthesis; L-tryptophan from chorismate: step 4/5. This is Indole-3-glycerol phosphate synthase 1 (trpC1) from Streptomyces coelicolor (strain ATCC BAA-471 / A3(2) / M145).